We begin with the raw amino-acid sequence, 213 residues long: Insulin-like peptide INSL6 (213 aa).

An N-terminal signal peptide occupies residues 1–20; that stretch reads MPRLLRLSLLWLGLLLVRFS. Cystine bridges form between C33–C179, C45–C192, and C178–C183. The propeptide at 55–168 is connecting peptide; it reads FEEETPFSRL…SNLFWGHHPQ (114 aa). Residues 201 to 213 constitute a propeptide that is removed on maturation; that stretch reads LKEKRSSLVTKIY.

It belongs to the insulin family. Testis specific.

Its subcellular location is the secreted. Its function is as follows. May have a role in sperm development and fertilization. This chain is Insulin-like peptide INSL6 (INSL6), found in Homo sapiens (Human).